We begin with the raw amino-acid sequence, 387 residues long: Flap endonuclease 1 (387 aa).

The tract at residues 1 to 104 (MGIKGLSQLI…GELEKRKERQ (104 aa)) is N-domain. Mg(2+) is bound at residue aspartate 34. DNA is bound at residue arginine 70. Mg(2+) contacts are provided by aspartate 86, glutamate 158, glutamate 160, aspartate 179, and aspartate 181. The segment at 122–253 (KMVMWNKRTT…KKALAMIKKY (132 aa)) is I-domain. Residue glutamate 158 coordinates DNA. Residues glycine 231 and aspartate 233 each coordinate DNA. Residue aspartate 233 coordinates Mg(2+). A disordered region spans residues 332-387 (SSRGKPTQTRLDGFFTPVASSSTTKKKAPAKKDDKKSATDKKRKAADASTSSKKKK). Positions 338 to 346 (TQTRLDGFF) are interaction with PCNA. A compositionally biased stretch (basic and acidic residues) spans 361 to 371 (AKKDDKKSATD). A compositionally biased stretch (low complexity) spans 378–387 (DASTSSKKKK).

Belongs to the XPG/RAD2 endonuclease family. FEN1 subfamily. In terms of assembly, interacts with PCNA. Three molecules of FEN1 bind to one PCNA trimer with each molecule binding to one PCNA monomer. PCNA stimulates the nuclease activity without altering cleavage specificity. Mg(2+) is required as a cofactor. Post-translationally, phosphorylated. Phosphorylation upon DNA damage induces relocalization to the nuclear plasma.

The protein localises to the nucleus. It localises to the nucleolus. Its subcellular location is the nucleoplasm. It is found in the mitochondrion. In terms of biological role, structure-specific nuclease with 5'-flap endonuclease and 5'-3' exonuclease activities involved in DNA replication and repair. During DNA replication, cleaves the 5'-overhanging flap structure that is generated by displacement synthesis when DNA polymerase encounters the 5'-end of a downstream Okazaki fragment. It enters the flap from the 5'-end and then tracks to cleave the flap base, leaving a nick for ligation. Also involved in the long patch base excision repair (LP-BER) pathway, by cleaving within the apurinic/apyrimidinic (AP) site-terminated flap. Acts as a genome stabilization factor that prevents flaps from equilibrating into structures that lead to duplications and deletions. Also possesses 5'-3' exonuclease activity on nicked or gapped double-stranded DNA, and exhibits RNase H activity. Also involved in replication and repair of rDNA and in repairing mitochondrial DNA. The chain is Flap endonuclease 1 from Naegleria gruberi (Amoeba).